A 345-amino-acid chain; its full sequence is Hydroxymethylglutaryl-CoA synthase (345 aa).

Asp28 contributes to the (3S)-3-hydroxy-3-methylglutaryl-CoA binding site. Glu80 acts as the Proton donor/acceptor in catalysis. Cys112 and Thr153 together coordinate (3S)-3-hydroxy-3-methylglutaryl-CoA. The active-site Acyl-thioester intermediate is Cys112. CoA is bound at residue Arg199. Thr201 and His234 together coordinate (3S)-3-hydroxy-3-methylglutaryl-CoA. His234 acts as the Proton donor/acceptor in catalysis. Lys239 provides a ligand contact to CoA. (3S)-3-hydroxy-3-methylglutaryl-CoA contacts are provided by Arg243, Asn266, and Ser296.

The protein belongs to the thiolase-like superfamily. Archaeal HMG-CoA synthase family. In terms of assembly, interacts with acetoacetyl-CoA thiolase that catalyzes the precedent step in the pathway and with a DUF35 protein. The acetoacetyl-CoA thiolase/HMG-CoA synthase complex channels the intermediate via a fused CoA-binding site, which allows for efficient coupling of the endergonic thiolase reaction with the exergonic HMGCS reaction.

The catalysed reaction is acetoacetyl-CoA + acetyl-CoA + H2O = (3S)-3-hydroxy-3-methylglutaryl-CoA + CoA + H(+). It participates in metabolic intermediate biosynthesis; (R)-mevalonate biosynthesis; (R)-mevalonate from acetyl-CoA: step 2/3. Functionally, catalyzes the condensation of acetyl-CoA with acetoacetyl-CoA to form 3-hydroxy-3-methylglutaryl-CoA (HMG-CoA). Functions in the mevalonate (MVA) pathway leading to isopentenyl diphosphate (IPP), a key precursor for the biosynthesis of isoprenoid compounds that are building blocks of archaeal membrane lipids. The polypeptide is Hydroxymethylglutaryl-CoA synthase (Methanobrevibacter smithii (strain ATCC 35061 / DSM 861 / OCM 144 / PS)).